The chain runs to 353 residues: NADH-quinone oxidoreductase subunit H (353 aa).

Transmembrane regions (helical) follow at residues 8-28 (LLVY…IFIW), 75-95 (GVFW…FAAI), 108-128 (IGIL…FMAG), 148-168 (VSYE…TGSL), 179-199 (VPFI…AMAE), 229-249 (LFYL…TTLF), 258-278 (LHPV…IIWV), 297-317 (FLLP…LIAP), and 319-339 (INTA…VLLF).

The protein belongs to the complex I subunit 1 family. As to quaternary structure, NDH-1 is composed of 14 different subunits. Subunits NuoA, H, J, K, L, M, N constitute the membrane sector of the complex.

The protein localises to the cell membrane. The enzyme catalyses a quinone + NADH + 5 H(+)(in) = a quinol + NAD(+) + 4 H(+)(out). In terms of biological role, NDH-1 shuttles electrons from NADH, via FMN and iron-sulfur (Fe-S) centers, to quinones in the respiratory chain. The immediate electron acceptor for the enzyme in this species is believed to be ubiquinone. Couples the redox reaction to proton translocation (for every two electrons transferred, four hydrogen ions are translocated across the cytoplasmic membrane), and thus conserves the redox energy in a proton gradient. This subunit may bind ubiquinone. The polypeptide is NADH-quinone oxidoreductase subunit H (Dehalococcoides mccartyi (strain CBDB1)).